The chain runs to 535 residues: Bifunctional purine biosynthesis protein PurH (535 aa).

Residues 1 to 148 enclose the MGS-like domain; sequence MNNARPIRRA…KNHKDTTIIV (148 aa).

Belongs to the PurH family.

The enzyme catalyses (6R)-10-formyltetrahydrofolate + 5-amino-1-(5-phospho-beta-D-ribosyl)imidazole-4-carboxamide = 5-formamido-1-(5-phospho-D-ribosyl)imidazole-4-carboxamide + (6S)-5,6,7,8-tetrahydrofolate. It catalyses the reaction IMP + H2O = 5-formamido-1-(5-phospho-D-ribosyl)imidazole-4-carboxamide. It participates in purine metabolism; IMP biosynthesis via de novo pathway; 5-formamido-1-(5-phospho-D-ribosyl)imidazole-4-carboxamide from 5-amino-1-(5-phospho-D-ribosyl)imidazole-4-carboxamide (10-formyl THF route): step 1/1. It functions in the pathway purine metabolism; IMP biosynthesis via de novo pathway; IMP from 5-formamido-1-(5-phospho-D-ribosyl)imidazole-4-carboxamide: step 1/1. The protein is Bifunctional purine biosynthesis protein PurH of Shewanella woodyi (strain ATCC 51908 / MS32).